We begin with the raw amino-acid sequence, 549 residues long: Glucose-6-phosphate isomerase (549 aa).

Glu-355 serves as the catalytic Proton donor. Catalysis depends on residues His-386 and Lys-514.

The protein belongs to the GPI family.

It localises to the cytoplasm. It catalyses the reaction alpha-D-glucose 6-phosphate = beta-D-fructose 6-phosphate. The protein operates within carbohydrate biosynthesis; gluconeogenesis. It functions in the pathway carbohydrate degradation; glycolysis; D-glyceraldehyde 3-phosphate and glycerone phosphate from D-glucose: step 2/4. In terms of biological role, catalyzes the reversible isomerization of glucose-6-phosphate to fructose-6-phosphate. The polypeptide is Glucose-6-phosphate isomerase (Enterobacter sp. (strain 638)).